The sequence spans 845 residues: Protein kintoun (845 aa).

Positions 362-382 are enriched in basic and acidic residues; sequence SKEQAQMHETLRHFSREDSGV. Disordered stretches follow at residues 362–420, 575–691, and 773–845; these read SKEQ…PVRH, QALK…SMSD, and AQHR…EMDD. Ser380 bears the Phosphoserine mark. A compositionally biased stretch (acidic residues) spans 391-400; that stretch reads PVEEDPDGEL. Residues 584–593 show a composition bias toward basic and acidic residues; that stretch reads GTKEEEKENQ. Basic residues predominate over residues 611–622; that stretch reads KPGKKQRKRNKK. Residues 640-671 are compositionally biased toward polar residues; sequence LTKNSELQPKSTFNLPQRKQRSYSECNDSTGG. Ser779 bears the Phosphoserine mark. Over residues 794–804 the composition is skewed to polar residues; the sequence is LKQQENQSRNC.

Belongs to the PIH1 family. Kintoun subfamily. Interacts with Pp1alpha-96A, Pp1-87B, Pp1-13C and flw.

Its subcellular location is the cytoplasm. Required for cytoplasmic pre-assembly of axonemal dyneins, thereby playing a central role in motility in cilia and flagella. Involved in pre-assembly of dynein arm complexes in the cytoplasm before intraflagellar transport loads them for the ciliary compartment. The sequence is that of Protein kintoun from Drosophila erecta (Fruit fly).